The chain runs to 1538 residues: Phenolphthiocerol/phthiocerol polyketide synthase subunit B (1538 aa).

The Ketosynthase family 3 (KS3) domain occupies 33 to 455 (AEPVAVVGIG…GTNAHVIIEQ (423 aa)). Catalysis depends on for beta-ketoacyl synthase activity residues Cys205, His340, and His377. Residues 553–882 (DGSPGPGTVF…TNLYTADIAH (330 aa)) are acyltransferase. Ser649 (for malonyltransferase activity) is an active-site residue. 1153–1196 (SQLVIGATGNIGPHLIRQLARMGAKTIVAMARKPGALDELTQCL) contributes to the NADP(+) binding site. Positions 1153–1328 (SQLVIGATGN…TVVDWGLWKS (176 aa)) are beta-ketoacyl reductase. A Carrier domain is found at 1423 to 1498 (DMLFDHVGAL…SLTDYLATVL (76 aa)). Ser1458 carries the O-(pantetheine 4'-phosphoryl)serine modification.

Requires NADP(+) as cofactor. Pantetheine 4'-phosphate is required as a cofactor.

The enzyme catalyses icosanoyl-[(phenol)carboxyphthiodiolenone synthase] + 2 (S)-methylmalonyl-CoA + 3 malonyl-CoA + 5 NADPH + 10 H(+) = C32-carboxyphthiodiolenone-[(phenol)carboxyphthiodiolenone synthase] + 5 CO2 + 5 NADP(+) + 5 CoA + 2 H2O. It catalyses the reaction docosanoyl-[(phenol)carboxyphthiodiolenone synthase] + 2 (S)-methylmalonyl-CoA + 3 malonyl-CoA + 5 NADPH + 10 H(+) = C34-carboxyphthiodiolenone-[(phenol)carboxyphthiodiolenone synthase] + 5 CO2 + 5 NADP(+) + 5 CoA + 2 H2O. It carries out the reaction 17-(4-hydroxyphenyl)heptadecanoyl-[(phenol)carboxyphthiodiolenone synthase] + 2 (S)-methylmalonyl-CoA + 3 malonyl-CoA + 5 NADPH + 10 H(+) = C35-(phenol)carboxyphthiodiolenone-[(phenol)carboxyphthiodiolenone synthase] + 5 CO2 + 5 NADP(+) + 5 CoA + 2 H2O. The catalysed reaction is 19-(4-hydroxyphenyl)nonadecanoyl-[(phenol)carboxyphthiodiolenone synthase] + 2 (S)-methylmalonyl-CoA + 3 malonyl-CoA + 5 NADPH + 10 H(+) = C37-(phenol)carboxyphthiodiolenone-[(phenol)carboxyphthiodiolenone synthase] + 5 CO2 + 5 NADP(+) + 5 CoA + 2 H2O. It functions in the pathway lipid metabolism; fatty acid biosynthesis. Functionally, part of the PpsABCDE complex involved in the biosynthesis of the lipid core common to phthiocerols and phenolphthiocerols by successive additions of malonyl-CoA or methylmalonyl-CoA extender units. PpsA can accept as substrate the activated forms of either icosanoyl (C20), docosanoyl (C22) or lignoceroyl (C24) groups from FadD26, or a (4-hydroxyphenyl)-C17 or (4-hydroxyphenyl)-C19 fatty acyl from FadD29. PpsA initiates the biosynthesis and extends its substrate using a malonyl-CoA extender unit. The PpsB and PpsC proteins add the second and third malonyl-CoA extender units. PpsD adds an (R)-methylmalonyl unit and PpsE adds a second (R)-methylmalonyl unit. The incorporation of the methylmalonyl units results in formation of two branched methyl groups in the elongated product. This Mycobacterium bovis (strain ATCC BAA-935 / AF2122/97) protein is Phenolphthiocerol/phthiocerol polyketide synthase subunit B (ppsB).